Here is a 365-residue protein sequence, read N- to C-terminus: Crh-like protein ARB_03382 (365 aa).

The signal sequence occupies residues 1–25; sequence MMASRRISVLSSLGLFACLLSPVVA. Residues 26 to 302 lie on the Extracellular side of the membrane; the sequence is QTFTYCNPLE…RWRELPTAAK (277 aa). Residues cysteine 31 and cysteine 39 are joined by a disulfide bond. N-linked (GlcNAc...) asparagine glycosylation is found at asparagine 48, asparagine 54, asparagine 63, and asparagine 77. The region spanning 50-243 is the GH16 domain; the sequence is TTYLNSSLNP…YEKTPYIMSV (194 aa). The Nucleophile role is filled by glutamate 125. The active-site Proton donor is the glutamate 129. Glutamate 129 lines the chitin pocket. N-linked (GlcNAc...) asparagine glycans are attached at residues asparagine 147 and asparagine 168. Arginine 209 and tryptophan 213 together coordinate chitin. Residues 303–323 traverse the membrane as a helical segment; sequence IAIFASIGGLVILGMAIIAFC. The Cytoplasmic portion of the chain corresponds to 324–365; it reads CVKQRRAGRREFSMENSKFVEDQNNVMAMRTQWNHKYKPVGS.

This sequence belongs to the glycosyl hydrolase 16 family. CRH1 subfamily.

It localises to the membrane. The enzyme catalyses Random endo-hydrolysis of N-acetyl-beta-D-glucosaminide (1-&gt;4)-beta-linkages in chitin and chitodextrins.. Dual chitinase/transglycosylase that plays a role in cell wall architecture. Chitinase and transglycosylase activities are coupled. Required for the polysaccharide cross-linking at the septa and the cell wall. More specifically, transfers chitin to 1,6-beta-glucan in the cell wall. Plays an important role in fungal pathogenesis. Involved in cell wall assembly and regeneration, filamentation, and adherence to host cells. The polypeptide is Crh-like protein ARB_03382 (Arthroderma benhamiae (strain ATCC MYA-4681 / CBS 112371) (Trichophyton mentagrophytes)).